Reading from the N-terminus, the 96-residue chain is Small ribosomal subunit protein bS6 (96 aa).

Belongs to the bacterial ribosomal protein bS6 family.

Its function is as follows. Binds together with bS18 to 16S ribosomal RNA. In Mycobacterium leprae (strain TN), this protein is Small ribosomal subunit protein bS6 (rpsF).